The sequence spans 749 residues: NAD(P)H-quinone oxidoreductase subunit 5, chloroplastic (749 aa).

The next 16 helical transmembrane spans lie at tryptophan 9 to phenylalanine 29, tryptophan 40 to isoleucine 60, isoleucine 89 to isoleucine 109, phenylalanine 125 to isoleucine 145, isoleucine 147 to threonine 167, glycine 185 to phenylalanine 205, asparagine 221 to alanine 241, threonine 260 to alanine 280, leucine 285 to leucine 305, leucine 329 to isoleucine 349, alanine 356 to serine 376, asparagine 398 to serine 418, tryptophan 427 to tyrosine 447, leucine 553 to phenylalanine 573, phenylalanine 607 to leucine 627, and serine 727 to leucine 747.

Belongs to the complex I subunit 5 family. In terms of assembly, NDH is composed of at least 16 different subunits, 5 of which are encoded in the nucleus.

The protein resides in the plastid. The protein localises to the chloroplast thylakoid membrane. It carries out the reaction a plastoquinone + NADH + (n+1) H(+)(in) = a plastoquinol + NAD(+) + n H(+)(out). The enzyme catalyses a plastoquinone + NADPH + (n+1) H(+)(in) = a plastoquinol + NADP(+) + n H(+)(out). Functionally, NDH shuttles electrons from NAD(P)H:plastoquinone, via FMN and iron-sulfur (Fe-S) centers, to quinones in the photosynthetic chain and possibly in a chloroplast respiratory chain. The immediate electron acceptor for the enzyme in this species is believed to be plastoquinone. Couples the redox reaction to proton translocation, and thus conserves the redox energy in a proton gradient. This Vitis vinifera (Grape) protein is NAD(P)H-quinone oxidoreductase subunit 5, chloroplastic (ndhF).